The following is a 911-amino-acid chain: SH3 and PX domain-containing protein 2B (911 aa).

The PX domain occupies 5 to 129 (RSIVEVKVLD…QFFETRPEDL (125 aa)). Tyr25 carries the phosphotyrosine modification. SH3 domains follow at residues 152–211 (MVLE…GQDG) and 221–280 (EEEE…KNSG). The interval 275 to 366 (LKKNSGEPLP…GLNLPKPPIP (92 aa)) is disordered. Ser279 and Ser291 each carry phosphoserine. Positions 282–292 (PLPPKPGPGSP) are enriched in pro residues. Residues 311 to 337 (GREKELLSSQRDGRFEGRPVPDGDAKQ) show a composition bias toward basic and acidic residues. The segment covering 338–347 (RSPKMRQRPP) has biased composition (basic residues). The region spanning 368-427 (QVEEEYYTIAEFQTTIPDGISFQAGLKVEVIEKNLSGWWYIQIEDKEGWAPATFIDKYKK) is the SH3 3 domain. Residues 458–834 (NTGSEATGPS…GPWGTGKIGE (377 aa)) form a disordered region. Basic and acidic residues-rich tracts occupy residues 486 to 499 (KDWK…RKAS), 517 to 548 (EEKP…RTEQ), 571 to 586 (PARD…DKSR), 598 to 609 (CGHKVLAKEVKK), and 618 to 628 (SKTDLPEEKPD). Residues Ser499 and Ser528 each carry the phosphoserine modification. Composition is skewed to pro residues over residues 643–653 (RPKPAPSPKTE) and 756–766 (VVPPRRPPPPK). The segment covering 822 to 831 (GSLGPWGTGK) has biased composition (gly residues). Residue Ser843 is modified to Phosphoserine. Residues 850–911 (LKDSLYVAVA…IPSNYLRKKP (62 aa)) enclose the SH3 4 domain.

It belongs to the SH3PXD2 family. In terms of assembly, interacts with ADAM15. Interacts with NOXO1. Interacts (via SH3 domains) with NOXA1; the interaction is direct. Interacts with FASLG. In terms of processing, phosphorylated in SRC-transformed cells. In terms of tissue distribution, expressed in fibroblasts.

It is found in the cytoplasm. The protein localises to the cell projection. The protein resides in the podosome. Functionally, adapter protein involved in invadopodia and podosome formation and extracellular matrix degradation. Binds matrix metalloproteinases (ADAMs), NADPH oxidases (NOXs) and phosphoinositides. Acts as an organizer protein that allows NOX1- or NOX3-dependent reactive oxygen species (ROS) generation and ROS localization. Plays a role in mitotic clonal expansion during the immediate early stage of adipocyte differentiation. The sequence is that of SH3 and PX domain-containing protein 2B (SH3PXD2B) from Homo sapiens (Human).